A 403-amino-acid polypeptide reads, in one-letter code: MGRANKVVLAYSGGVDTSVCIPYLKQEWGVEEVITFAADLGQGDELEPIRQKALDAGASQSLVGDLIQPFIEEFAFPAIRANALYEGRYPLSTALARPLIARRLVEVAREVGADAVAHGCTGKGNDQVRFDVAIAALAPDLKVLTPAREWGMSREETIAYGERCGIPAPVSKKSPYSIDLNLLGRSIEAGPLEDPMVAPPEEVFAMTSPMSDTPDAAEEIEIAFEAGNPVAINGQVLDPVAMIREANRLAGSHGIGRLDMIENRVVGIKSREIYETPGLLLLIQAHQELESLTLAADVLRSKRQLEMQWADLVYQGLWFGPLKDALDGFMDRTQQHVNGVVRLRLYKGNATVIGRGSTQSSLYVPAMASYGSEDAFDHRAAEGFIYVWGLPTRLWAASQRTSG.

ATP contacts are provided by residues alanine 10 to serine 18 and alanine 38. Tyrosine 89 is a binding site for L-citrulline. Glycine 119 serves as a coordination point for ATP. The L-aspartate site is built by threonine 121, asparagine 125, and aspartate 126. Asparagine 125 is a binding site for L-citrulline. Arginine 129, serine 177, serine 186, glutamate 262, and tyrosine 274 together coordinate L-citrulline.

The protein belongs to the argininosuccinate synthase family. Type 1 subfamily. Homotetramer.

The protein localises to the cytoplasm. The enzyme catalyses L-citrulline + L-aspartate + ATP = 2-(N(omega)-L-arginino)succinate + AMP + diphosphate + H(+). It functions in the pathway amino-acid biosynthesis; L-arginine biosynthesis; L-arginine from L-ornithine and carbamoyl phosphate: step 2/3. In Parasynechococcus marenigrum (strain WH8102), this protein is Argininosuccinate synthase.